The primary structure comprises 443 residues: Ribosomal protein uS12 methylthiotransferase RimO (443 aa).

The MTTase N-terminal domain occupies 1–114 (MGFVSLGCPK…VMQAVHTHLP (114 aa)). C8, C44, C73, C145, C149, and C152 together coordinate [4Fe-4S] cluster. Residues 131 to 372 (LTPKHYAYLK…MEVAEEVSAR (242 aa)) enclose the Radical SAM core domain. One can recognise a TRAM domain in the interval 375 to 443 (QRKVGQTLRV…ADGHDLWGAV (69 aa)).

Belongs to the methylthiotransferase family. RimO subfamily. The cofactor is [4Fe-4S] cluster.

The protein localises to the cytoplasm. It catalyses the reaction L-aspartate(89)-[ribosomal protein uS12]-hydrogen + (sulfur carrier)-SH + AH2 + 2 S-adenosyl-L-methionine = 3-methylsulfanyl-L-aspartate(89)-[ribosomal protein uS12]-hydrogen + (sulfur carrier)-H + 5'-deoxyadenosine + L-methionine + A + S-adenosyl-L-homocysteine + 2 H(+). Catalyzes the methylthiolation of an aspartic acid residue of ribosomal protein uS12. In Cupriavidus necator (strain ATCC 17699 / DSM 428 / KCTC 22496 / NCIMB 10442 / H16 / Stanier 337) (Ralstonia eutropha), this protein is Ribosomal protein uS12 methylthiotransferase RimO.